A 693-amino-acid chain; its full sequence is Kinesin-like protein KIFC1 (693 aa).

2 disordered regions span residues 1–24 and 48–156; these read MRGR…VRTT and VKSS…KRPA. 2 stretches are compositionally biased toward low complexity: residues 49–59 and 127–138; these read KSSSRLPLPGS and QKPAPAAPAQKP. Residues serine 52 and serine 59 each carry the phosphoserine modification. A coiled-coil region spans residues 165–334; that stretch reads DLHEELKQYR…QELKGNIRVF (170 aa). Residues 330 to 683 form the Kinesin motor domain; it reads NIRVFCRVRP…LRFASKVNQC (354 aa). Threonine 379 is subject to Phosphothreonine. An ATP-binding site is contributed by 430–437; sequence GQTGSGKT.

Belongs to the TRAFAC class myosin-kinesin ATPase superfamily. Kinesin family. NCD subfamily. In terms of assembly, binds NUBP1 and NUBP2. Interacts with PPP1R42.

It localises to the nucleus. The protein localises to the cytoplasm. Its subcellular location is the cytoskeleton. The protein resides in the microtubule organizing center. It is found in the centrosome. It localises to the spindle. The protein localises to the early endosome. Functionally, minus end-directed microtubule-dependent motor required for bipolar spindle formation. May contribute to movement of early endocytic vesicles. Regulates cilium formation and structure. The protein is Kinesin-like protein KIFC1 of Rattus norvegicus (Rat).